Reading from the N-terminus, the 96-residue chain is MKIVKESLAGTFESSDLLVKVAPADGKLTVVINSEVMKQFGHQIKQVVNETLAALGVQEGTIIVDDKGALDCVIRARVQSAVLRATDGQQIEWETL.

O-(phosphoribosyl dephospho-coenzyme A)serine is present on S14.

This sequence belongs to the CitD family. Oligomer with a subunit composition of (alpha,beta,gamma)6.

The protein resides in the cytoplasm. Its function is as follows. Covalent carrier of the coenzyme of citrate lyase. The protein is Citrate lyase acyl carrier protein of Pectobacterium carotovorum subsp. carotovorum (strain PC1).